The chain runs to 146 residues: Hemoglobin subunit beta (146 aa).

Residue Val1 is modified to N-acetylvaline. One can recognise a Globin domain in the interval 2–146 (HLTPEEKTAV…VANALAHKYH (145 aa)). Thr12 is modified (phosphothreonine). The residue at position 44 (Ser44) is a Phosphoserine. N6-acetyllysine is present on Lys59. His63 is a heme b binding site. Lys82 carries the N6-acetyllysine modification. His92 is a binding site for heme b. Cys93 bears the S-nitrosocysteine mark. Lys144 is subject to N6-acetyllysine.

It belongs to the globin family. As to quaternary structure, heterotetramer of two alpha chains and two beta chains. Red blood cells.

Involved in oxygen transport from the lung to the various peripheral tissues. This is Hemoglobin subunit beta (HBB) from Mandrillus sphinx (Mandrill).